The chain runs to 236 residues: 2,3,4,5-tetrahydropyridine-2,6-dicarboxylate N-acetyltransferase (236 aa).

The protein belongs to the transferase hexapeptide repeat family. DapH subfamily.

It catalyses the reaction (S)-2,3,4,5-tetrahydrodipicolinate + acetyl-CoA + H2O = L-2-acetamido-6-oxoheptanedioate + CoA. The protein operates within amino-acid biosynthesis; L-lysine biosynthesis via DAP pathway; LL-2,6-diaminopimelate from (S)-tetrahydrodipicolinate (acetylase route): step 1/3. In terms of biological role, catalyzes the transfer of an acetyl group from acetyl-CoA to tetrahydrodipicolinate. The sequence is that of 2,3,4,5-tetrahydropyridine-2,6-dicarboxylate N-acetyltransferase from Limosilactobacillus reuteri (strain DSM 20016) (Lactobacillus reuteri).